A 200-amino-acid polypeptide reads, in one-letter code: Holliday junction branch migration complex subunit RuvA (200 aa).

The segment at 1–65 (MYEYIKGTLT…ETEHVLYGFS (65 aa)) is domain I. The segment at 66–144 (SRAEKECFRL…TLMPLYLEEP (79 aa)) is domain II. A flexible linker region spans residues 145–149 (VVPSS). The tract at residues 150–200 (TANSSFKEGIGALMNLGFSRLAADRMMTEAVKELSEEASVAELLPIALRKS) is domain III.

This sequence belongs to the RuvA family. Homotetramer. Forms an RuvA(8)-RuvB(12)-Holliday junction (HJ) complex. HJ DNA is sandwiched between 2 RuvA tetramers; dsDNA enters through RuvA and exits via RuvB. An RuvB hexamer assembles on each DNA strand where it exits the tetramer. Each RuvB hexamer is contacted by two RuvA subunits (via domain III) on 2 adjacent RuvB subunits; this complex drives branch migration. In the full resolvosome a probable DNA-RuvA(4)-RuvB(12)-RuvC(2) complex forms which resolves the HJ.

The protein resides in the cytoplasm. Its function is as follows. The RuvA-RuvB-RuvC complex processes Holliday junction (HJ) DNA during genetic recombination and DNA repair, while the RuvA-RuvB complex plays an important role in the rescue of blocked DNA replication forks via replication fork reversal (RFR). RuvA specifically binds to HJ cruciform DNA, conferring on it an open structure. The RuvB hexamer acts as an ATP-dependent pump, pulling dsDNA into and through the RuvAB complex. HJ branch migration allows RuvC to scan DNA until it finds its consensus sequence, where it cleaves and resolves the cruciform DNA. In Chlamydia trachomatis serovar A (strain ATCC VR-571B / DSM 19440 / HAR-13), this protein is Holliday junction branch migration complex subunit RuvA.